Here is a 778-residue protein sequence, read N- to C-terminus: Dolichyl-phosphate-mannose--protein mannosyltransferase 4 (778 aa).

Positions 1–28 are enriched in basic and acidic residues; the sequence is MASKSEKAVKKAQKLSKEPSVELTDTKS. The segment at 1–44 is disordered; the sequence is MASKSEKAVKKAQKLSKEPSVELTDTKSSDNVTPKQKSPNSTEE. Residues 29 to 41 are compositionally biased toward polar residues; that stretch reads SDNVTPKQKSPNS. N40 carries an N-linked (GlcNAc...) asparagine glycan. Helical transmembrane passes span 60-80, 103-123, 145-165, 196-216, 223-243, 248-268, and 288-308; these read LAFVLITVLSFITRFWNLNLP, FFDLHPPFAKLLLALVAKLAG, VTIRAWPALLSSLVPPVVFLI, ILLDATLLFSMVCAIYCYVRF, PFSRPWWAWLFFTGFFLSCTI, VGFFTFLSIGLSVCLELWYLW, and FCLIFFPFLFFLFWFYMHFNI. N335 carries an N-linked (GlcNAc...) asparagine glycan. 3 consecutive MIR domains span residues 336-396, 408-467, and 474-529; these read STIL…ILPA, NVPV…VVMS, and RPLY…FDDI. The next 4 membrane-spanning stretches (helical) occupy residues 608–628, 644–664, 669–689, and 726–746; these read WWIIAGTVLSTTVVAAAEILL, FYRSTMFFYMTYVFHYLPFFI, LFLHHYLPAHLAGSLLVGAFI, and VIELICTLLLIFVVIYCFTFF.

Belongs to the glycosyltransferase 39 family.

Its subcellular location is the endoplasmic reticulum membrane. The catalysed reaction is a di-trans,poly-cis-dolichyl beta-D-mannosyl phosphate + L-seryl-[protein] = 3-O-(alpha-D-mannosyl)-L-seryl-[protein] + a di-trans,poly-cis-dolichyl phosphate + H(+). It catalyses the reaction a di-trans,poly-cis-dolichyl beta-D-mannosyl phosphate + L-threonyl-[protein] = 3-O-(alpha-D-mannosyl)-L-threonyl-[protein] + a di-trans,poly-cis-dolichyl phosphate + H(+). Its pathway is protein modification; protein glycosylation. Functionally, transfers mannose from Dol-P-mannose to Ser or Thr residues on proteins. Required for normal cell wall and septum formation. In Schizosaccharomyces pombe (strain 972 / ATCC 24843) (Fission yeast), this protein is Dolichyl-phosphate-mannose--protein mannosyltransferase 4 (ogm4).